Here is a 659-residue protein sequence, read N- to C-terminus: MALLSATAPAKTRFSLFSHEEAQHPHPHALSACCGGGASGKRQRARARVAAAMRPADAAASVAQAASPGGGGEGTRRPRVLVAGGGIGGLVLALAARRKGYEVTVFERDMSAVRGEGQYRGPIQIQSNALAALEAIDMSVAEEVMREGCVTGDRINGLVDGISGSWYIKFDTFTPAAERGLPVTRVISRMTLQQILARAVGDDAILNDSHVVDFIDDGNKVTAILEDGRKFEGDLLVGADGIWSKVRKVLFGQSEATYSEYTCYTGIADFVPPDIDTVGYRVFLGHKQYFVSSDVGAGKMQWYAFHKEPAGGTDPENGKNKRLLEIFNGWCDNVVDLINATDEEAILRRDIYDRPPTFNWGKGRVTLLGDSVHAMQPNLGQGGCMAIEDGYQLAVELEKSWQESAKSGTPMDIVSSLRRYEKERILRVSVIHGLARMAAIMATTYRPYLGVGLGPLSFLTKLRIPHPGRVGGRFFIKYGMPLMLSWVLGGNSTKLEGRPLSCRLSDKANDQLRRWFEDDDALEQAMGGEWYLLPTSSGDSQPIRLIRDEKKSLSIGSRSDPSNSTASLALPLPQISENHATITCKNKAFYVTDNGSEHGTWITDNEGRRYRVPPNFPVRFHPSDAIEFGSDKKAVFRVKVLSTLPYESARGGPQILQAA.

A chloroplast-targeting transit peptide spans 1–50; it reads MALLSATAPAKTRFSLFSHEEAQHPHPHALSACCGGGASGKRQRARARVA. FAD-binding positions include 79–107 and 357–370; these read RVLV…TVFE and TFNW…LLGD. The region spanning 553–607 is the FHA domain; that stretch reads LSIGSRSDPSNSTASLALPLPQISENHATITCKNKAFYVTDNGSEHGTWITDNEG.

FAD serves as cofactor. As to expression, expressed in young microspores.

Its subcellular location is the plastid. It is found in the chloroplast membrane. The protein resides in the chloroplast thylakoid membrane. The enzyme catalyses all-trans-zeaxanthin + 4 reduced [2Fe-2S]-[ferredoxin] + 2 O2 + 4 H(+) = all-trans-violaxanthin + 4 oxidized [2Fe-2S]-[ferredoxin] + 2 H2O. It participates in plant hormone biosynthesis; abscisate biosynthesis. Zeaxanthin epoxidase that plays an important role in the xanthophyll cycle and abscisic acid (ABA) biosynthesis. Converts zeaxanthin into antheraxanthin and subsequently violaxanthin. Required for resistance to osmotic and drought stresses, seed development and dormancy. The polypeptide is Zeaxanthin epoxidase, chloroplastic (ZEP) (Oryza sativa subsp. japonica (Rice)).